A 433-amino-acid polypeptide reads, in one-letter code: 5-methylthioadenosine/S-adenosylhomocysteine deaminase (433 aa).

Residues H67 and H69 each coordinate Zn(2+). The substrate site is built by E96, R148, and H186. H213 serves as a coordination point for Zn(2+). The substrate site is built by E216 and D301. D301 serves as a coordination point for Zn(2+).

Belongs to the metallo-dependent hydrolases superfamily. MTA/SAH deaminase family. Zn(2+) serves as cofactor.

The enzyme catalyses S-adenosyl-L-homocysteine + H2O + H(+) = S-inosyl-L-homocysteine + NH4(+). It carries out the reaction S-methyl-5'-thioadenosine + H2O + H(+) = S-methyl-5'-thioinosine + NH4(+). Catalyzes the deamination of 5-methylthioadenosine and S-adenosyl-L-homocysteine into 5-methylthioinosine and S-inosyl-L-homocysteine, respectively. Is also able to deaminate adenosine. The protein is 5-methylthioadenosine/S-adenosylhomocysteine deaminase of Desulforamulus reducens (strain ATCC BAA-1160 / DSM 100696 / MI-1) (Desulfotomaculum reducens).